Reading from the N-terminus, the 368-residue chain is Flap endonuclease 1 (368 aa).

The N-domain stretch occupies residues 1-104 (MGIHDLSKVI…GELLKRGARR (104 aa)). Residue Asp34 coordinates Mg(2+). DNA is bound by residues Arg47 and Arg70. Asp86 serves as a coordination point for Mg(2+). The interval 103–123 (RRKEAQANLEEATEQGDTEQM) is disordered. The interval 122 to 251 (QMEKFSRRLV…QKAYQLIKEH (130 aa)) is I-domain. Positions 158, 160, 179, and 181 each coordinate Mg(2+). A DNA-binding site is contributed by Glu158. The DNA site is built by Gly229 and Asp231. Asp231 contributes to the Mg(2+) binding site. Residues 334–342 (QQGRLDSFF) form an interaction with PCNA region.

The protein belongs to the XPG/RAD2 endonuclease family. FEN1 subfamily. In terms of assembly, interacts with PCNA. Three molecules of FEN1 bind to one PCNA trimer with each molecule binding to one PCNA monomer. PCNA stimulates the nuclease activity without altering cleavage specificity. Mg(2+) is required as a cofactor. In terms of processing, phosphorylated. Phosphorylation upon DNA damage induces relocalization to the nuclear plasma.

It localises to the nucleus. The protein resides in the nucleolus. Its subcellular location is the nucleoplasm. The protein localises to the mitochondrion. Functionally, structure-specific nuclease with 5'-flap endonuclease and 5'-3' exonuclease activities involved in DNA replication and repair. During DNA replication, cleaves the 5'-overhanging flap structure that is generated by displacement synthesis when DNA polymerase encounters the 5'-end of a downstream Okazaki fragment. It enters the flap from the 5'-end and then tracks to cleave the flap base, leaving a nick for ligation. Also involved in the long patch base excision repair (LP-BER) pathway, by cleaving within the apurinic/apyrimidinic (AP) site-terminated flap. Acts as a genome stabilization factor that prevents flaps from equilibrating into structures that lead to duplications and deletions. Also possesses 5'-3' exonuclease activity on nicked or gapped double-stranded DNA, and exhibits RNase H activity. Also involved in replication and repair of rDNA and in repairing mitochondrial DNA. This chain is Flap endonuclease 1, found in Monosiga brevicollis (Choanoflagellate).